The primary structure comprises 103 residues: Small ribosomal subunit protein uS10 (103 aa).

It belongs to the universal ribosomal protein uS10 family. In terms of assembly, part of the 30S ribosomal subunit.

Functionally, involved in the binding of tRNA to the ribosomes. The polypeptide is Small ribosomal subunit protein uS10 (Novosphingobium aromaticivorans (strain ATCC 700278 / DSM 12444 / CCUG 56034 / CIP 105152 / NBRC 16084 / F199)).